Here is an 800-residue protein sequence, read N- to C-terminus: DNA topoisomerase 4 subunit A (800 aa).

The Topo IIA-type catalytic domain occupies leucine 31–glutamate 495. Residue tyrosine 119 is the O-(5'-phospho-DNA)-tyrosine intermediate of the active site.

Belongs to the type II topoisomerase GyrA/ParC subunit family. ParC type 2 subfamily. As to quaternary structure, heterotetramer composed of ParC and ParE.

The protein resides in the cell membrane. It catalyses the reaction ATP-dependent breakage, passage and rejoining of double-stranded DNA.. Functionally, topoisomerase IV is essential for chromosome segregation. It relaxes supercoiled DNA. Performs the decatenation events required during the replication of a circular DNA molecule. The protein is DNA topoisomerase 4 subunit A of Staphylococcus aureus (strain NCTC 8325 / PS 47).